An 885-amino-acid polypeptide reads, in one-letter code: MADTTVEKLATEVGKSVERLIEQFSQAGIKKGHTDNVSEAEKQQLLDYLKKQHGGDNAPTKMTLQRKTVSTLSVAGNGGQSKDVKVEVRKTRTFVKRDANDAVLKAEEEAKAKAEAEAKAKAEAEAKAKAEAEVKAKAEAEAKAKAEAEAKAKAKAAAEVKVIKELSPEAEAARVEAERLKAVQAEATKRKQDEEAAKAAEKARLLAEENSKRWAEEERQRLEAERYSDHHITTSKVARAAEDSSDMDEEKRGRRARNKNTAKSKRGGKDARDGREKHMRNRSTAPESMAHGFNKPVAAVNRDVRIGETVTVAELAHLMAVKATEIIKQMMKMGSMVTINQVLDQETAQLVAEEMGHKVVLIRENELEQQVLSERDEEGVVKLEPRAPVVTIMGHVDHGKTSLLDYIRRAKVAAGEAGGITQHIGAYHVETDNGMITFLDTPGHAAFTAMRARGAKATDIVVLVVAADDGVMPQTIEAIQHAKAGNVPLIVAVNKMDKPEADIDRVKSELAQHGVMSEDWGGDNMFAFVSAKTGAGVDDLLEGILLQAEVLELKAVRDGMAAGVVIESQLDKGRGPVATILVQEGTLRQGDIVLCGLEYGKIRAMKDENGRSITEAGPSIPVEILGLSGVPSAGDEATVVRDERKAREVALYRQGKFRDVKLARQQKSKLENMFANMTEGEVKELNIVLKADVQGSLEAITDSLMGLSTDEVKVNIIARGVGALTETDATLAAASNAIMVGFNVRADAQARKTIESESVDLRYYSVIYNLIDEVKAAMTGMLSPEFKQQIIGLAEVRDVFKSPKLGAIAGCMVTEGTIKRSAPIRVLRDNVVIFEGELESLRRFKDDVNEVRNGMECGIGVKNYNDVRVGDQIEVFETVEVARTL.

2 disordered regions span residues 135–159 (KAKA…AAAE) and 184–289 (QAEA…PESM). The span at 184 to 232 (QAEATKRKQDEEAAKAAEKARLLAEENSKRWAEEERQRLEAERYSDHHI) shows a compositional bias: basic and acidic residues. Positions 253–266 (GRRARNKNTAKSKR) are enriched in basic residues. Basic and acidic residues predominate over residues 267–276 (GGKDARDGRE). The tr-type G domain maps to 385-554 (PRAPVVTIMG…LLQAEVLELK (170 aa)). The tract at residues 394-401 (GHVDHGKT) is G1. GTP is bound at residue 394 to 401 (GHVDHGKT). The interval 419–423 (GITQH) is G2. The interval 440 to 443 (DTPG) is G3. Residues 440 to 444 (DTPGH) and 494 to 497 (NKMD) each bind GTP. Residues 494–497 (NKMD) form a G4 region. Positions 530–532 (SAK) are G5.

This sequence belongs to the TRAFAC class translation factor GTPase superfamily. Classic translation factor GTPase family. IF-2 subfamily.

The protein localises to the cytoplasm. Its function is as follows. One of the essential components for the initiation of protein synthesis. Protects formylmethionyl-tRNA from spontaneous hydrolysis and promotes its binding to the 30S ribosomal subunits. Also involved in the hydrolysis of GTP during the formation of the 70S ribosomal complex. The polypeptide is Translation initiation factor IF-2 (Shewanella sp. (strain MR-7)).